The following is a 295-amino-acid chain: UDP-3-O-acyl-N-acetylglucosamine deacetylase (295 aa).

Zn(2+)-binding residues include histidine 75, histidine 232, and aspartate 236. Histidine 259 (proton donor) is an active-site residue.

This sequence belongs to the LpxC family. Requires Zn(2+) as cofactor.

The enzyme catalyses a UDP-3-O-[(3R)-3-hydroxyacyl]-N-acetyl-alpha-D-glucosamine + H2O = a UDP-3-O-[(3R)-3-hydroxyacyl]-alpha-D-glucosamine + acetate. It functions in the pathway glycolipid biosynthesis; lipid IV(A) biosynthesis; lipid IV(A) from (3R)-3-hydroxytetradecanoyl-[acyl-carrier-protein] and UDP-N-acetyl-alpha-D-glucosamine: step 2/6. Catalyzes the hydrolysis of UDP-3-O-myristoyl-N-acetylglucosamine to form UDP-3-O-myristoylglucosamine and acetate, the committed step in lipid A biosynthesis. The protein is UDP-3-O-acyl-N-acetylglucosamine deacetylase of Helicobacter pylori (strain ATCC 700392 / 26695) (Campylobacter pylori).